A 239-amino-acid polypeptide reads, in one-letter code: Small ribosomal subunit protein uS3 (239 aa).

One can recognise a KH type-2 domain in the interval Ile38–Lys106.

It belongs to the universal ribosomal protein uS3 family. In terms of assembly, part of the 30S ribosomal subunit. Forms a tight complex with proteins S10 and S14.

Binds the lower part of the 30S subunit head. Binds mRNA in the 70S ribosome, positioning it for translation. This chain is Small ribosomal subunit protein uS3, found in Elusimicrobium minutum (strain Pei191).